The primary structure comprises 596 residues: Elongation factor 4 (596 aa).

One can recognise a tr-type G domain in the interval 2–183 (ENIRNFSIIA…AIIERIPAPS (182 aa)). Residues 14–19 (DHGKST) and 130–133 (NKID) contribute to the GTP site.

This sequence belongs to the TRAFAC class translation factor GTPase superfamily. Classic translation factor GTPase family. LepA subfamily.

Its subcellular location is the cell inner membrane. It catalyses the reaction GTP + H2O = GDP + phosphate + H(+). Required for accurate and efficient protein synthesis under certain stress conditions. May act as a fidelity factor of the translation reaction, by catalyzing a one-codon backward translocation of tRNAs on improperly translocated ribosomes. Back-translocation proceeds from a post-translocation (POST) complex to a pre-translocation (PRE) complex, thus giving elongation factor G a second chance to translocate the tRNAs correctly. Binds to ribosomes in a GTP-dependent manner. The chain is Elongation factor 4 from Nitratiruptor sp. (strain SB155-2).